A 487-amino-acid chain; its full sequence is Aspartyl/glutamyl-tRNA(Asn/Gln) amidotransferase subunit B (487 aa).

This sequence belongs to the GatB/GatE family. GatB subfamily. In terms of assembly, heterotrimer of A, B and C subunits.

It carries out the reaction L-glutamyl-tRNA(Gln) + L-glutamine + ATP + H2O = L-glutaminyl-tRNA(Gln) + L-glutamate + ADP + phosphate + H(+). It catalyses the reaction L-aspartyl-tRNA(Asn) + L-glutamine + ATP + H2O = L-asparaginyl-tRNA(Asn) + L-glutamate + ADP + phosphate + 2 H(+). In terms of biological role, allows the formation of correctly charged Asn-tRNA(Asn) or Gln-tRNA(Gln) through the transamidation of misacylated Asp-tRNA(Asn) or Glu-tRNA(Gln) in organisms which lack either or both of asparaginyl-tRNA or glutaminyl-tRNA synthetases. The reaction takes place in the presence of glutamine and ATP through an activated phospho-Asp-tRNA(Asn) or phospho-Glu-tRNA(Gln). This Roseiflexus sp. (strain RS-1) protein is Aspartyl/glutamyl-tRNA(Asn/Gln) amidotransferase subunit B.